Here is a 335-residue protein sequence, read N- to C-terminus: Glycerol-3-phosphate dehydrogenase [NAD(P)+] (335 aa).

Residues serine 15, tyrosine 16, histidine 36, and lysine 110 each coordinate NADPH. Residues lysine 110, glycine 139, and threonine 141 each contribute to the sn-glycerol 3-phosphate site. Alanine 143 is an NADPH binding site. Lysine 195, aspartate 248, serine 258, arginine 259, and asparagine 260 together coordinate sn-glycerol 3-phosphate. Residue lysine 195 is the Proton acceptor of the active site. An NADPH-binding site is contributed by arginine 259. 2 residues coordinate NADPH: valine 283 and glutamate 285.

This sequence belongs to the NAD-dependent glycerol-3-phosphate dehydrogenase family.

It is found in the cytoplasm. It carries out the reaction sn-glycerol 3-phosphate + NAD(+) = dihydroxyacetone phosphate + NADH + H(+). It catalyses the reaction sn-glycerol 3-phosphate + NADP(+) = dihydroxyacetone phosphate + NADPH + H(+). It functions in the pathway membrane lipid metabolism; glycerophospholipid metabolism. Functionally, catalyzes the reduction of the glycolytic intermediate dihydroxyacetone phosphate (DHAP) to sn-glycerol 3-phosphate (G3P), the key precursor for phospholipid synthesis. The chain is Glycerol-3-phosphate dehydrogenase [NAD(P)+] from Mannheimia succiniciproducens (strain KCTC 0769BP / MBEL55E).